Consider the following 259-residue polypeptide: Ribosomal RNA small subunit methyltransferase J (259 aa).

S-adenosyl-L-methionine contacts are provided by residues 101–102 (RD), 117–118 (ER), 153–154 (SS), and Asp-176.

The protein belongs to the methyltransferase superfamily. RsmJ family.

The protein localises to the cytoplasm. The enzyme catalyses guanosine(1516) in 16S rRNA + S-adenosyl-L-methionine = N(2)-methylguanosine(1516) in 16S rRNA + S-adenosyl-L-homocysteine + H(+). Specifically methylates the guanosine in position 1516 of 16S rRNA. The chain is Ribosomal RNA small subunit methyltransferase J from Vibrio vulnificus (strain YJ016).